A 779-amino-acid chain; its full sequence is Subtilisin-like protease SBT3.18 (779 aa).

An N-terminal signal peptide occupies residues 1-21 (MYFWVMFFTLMIKVKLYITNG). Positions 22–109 (DIFQNRPTVY…VFKSKSLKLH (88 aa)) are cleaved as a propeptide — activation peptide. The region spanning 30-109 (VYVVYLGANR…VFKSKSLKLH (80 aa)) is the Inhibitor I9 domain. N-linked (GlcNAc...) asparagine glycosylation is present at N84. A Peptidase S8 domain is found at 113–621 (SWDFLGLAVD…AGHINPLKAM (509 aa)). Active-site charge relay system residues include D144 and H221. Residues N236 and N406 are each glycosylated (N-linked (GlcNAc...) asparagine). S553 (charge relay system) is an active-site residue.

Belongs to the peptidase S8 family.

The protein localises to the secreted. The sequence is that of Subtilisin-like protease SBT3.18 from Arabidopsis thaliana (Mouse-ear cress).